A 377-amino-acid chain; its full sequence is Methylthioribose-1-phosphate isomerase (377 aa).

Aspartate 254 acts as the Proton donor in catalysis.

This sequence belongs to the eIF-2B alpha/beta/delta subunits family. MtnA subfamily.

Its subcellular location is the cytoplasm. The protein localises to the nucleus. It carries out the reaction 5-(methylsulfanyl)-alpha-D-ribose 1-phosphate = 5-(methylsulfanyl)-D-ribulose 1-phosphate. Its pathway is amino-acid biosynthesis; L-methionine biosynthesis via salvage pathway; L-methionine from S-methyl-5-thio-alpha-D-ribose 1-phosphate: step 1/6. Its function is as follows. Catalyzes the interconversion of methylthioribose-1-phosphate (MTR-1-P) into methylthioribulose-1-phosphate (MTRu-1-P). The protein is Methylthioribose-1-phosphate isomerase (mri1) of Aspergillus terreus (strain NIH 2624 / FGSC A1156).